The following is a 511-amino-acid chain: Probable G-protein coupled receptor 101 (511 aa).

Residues 1–35 (MPPSCTNSTQENNGSRVCLPLSKMPISVAHGIIRS) are Extracellular-facing. N-linked (GlcNAc...) asparagine glycosylation is found at asparagine 7 and asparagine 13. Residues 36-56 (VVLLVILGVAFLGNVVLGYVL) traverse the membrane as a helical segment. Topologically, residues 57-67 (HRKPNLLQVTN) are cytoplasmic. Residues 68-90 (RFIFNLLVTDLLQVALVAPWVVS) traverse the membrane as a helical segment. Residues 91–106 (TAIPFFWPLNIHFCTA) lie on the Extracellular side of the membrane. Cysteine 104 and cysteine 182 are disulfide-bonded. The helical transmembrane segment at 107 to 127 (LVSLTHLFAFASVNTIVVVSV) threads the bilayer. Residues 128–149 (DRYLTIIHPLSYPSKMTNRRSY) lie on the Cytoplasmic side of the membrane. The helical transmembrane segment at 150–170 (ILLYGTWIAAFLQSTPPLYGW) threads the bilayer. Topologically, residues 171-196 (GHATFDDRNAFCSMIWGASPAYTVVS) are extracellular. Residues 197–217 (VVSFLVIPLGVMIACYSVVFG) traverse the membrane as a helical segment. At 218 to 398 (AARRQQALLY…PPCYECKAAR (181 aa)) the chain is on the cytoplasmic side. Over residues 240–261 (DSVVHENEEGAKKRDEFQDKNE) the composition is skewed to basic and acidic residues. Disordered regions lie at residues 240–315 (DSVV…EVSN) and 367–386 (EAMRIPESSPPSRRNSTSDP). Residues 376–385 (PPSRRNSTSD) are compositionally biased toward polar residues. The chain crosses the membrane as a helical span at residues 399–419 (VIFVIISTYVLSLGPYCFLAV). Residues 420 to 432 (LAVWVDIDTRVPQ) are Extracellular-facing. The helical transmembrane segment at 433 to 453 (WVITIIIWLFFLQCCIHPYVY) threads the bilayer. Residues 454–511 (GYMHKSIKKEIQEVLKKLICKKSPPVEDSHPDLHETEAGTEGGIEGKAVPSHDSATSP) lie on the Cytoplasmic side of the membrane. Residues 476-511 (SPPVEDSHPDLHETEAGTEGGIEGKAVPSHDSATSP) are disordered. Over residues 477–490 (PPVEDSHPDLHETE) the composition is skewed to basic and acidic residues.

It belongs to the G-protein coupled receptor 1 family. As to expression, expressed in the brain in hypothalamus.

Its subcellular location is the cell membrane. Orphan receptor. The polypeptide is Probable G-protein coupled receptor 101 (Gpr101) (Mus musculus (Mouse)).